Here is a 71-residue protein sequence, read N- to C-terminus: MPRGSAERSLSFLVSIAFFGLAPTIPLLAIALWHVSWFDGHGDEQMGADSDDRAHAFQSDAAHRSDLIARM.

The chain crosses the membrane as a helical span at residues 12-32 (FLVSIAFFGLAPTIPLLAIAL).

Its subcellular location is the membrane. This is an uncharacterized protein from Sinorhizobium fredii (strain NBRC 101917 / NGR234).